Reading from the N-terminus, the 1001-residue chain is Serine/threonine-protein kinase TAO1 (1001 aa).

At Ser9 the chain carries Phosphoserine. In terms of domain architecture, Protein kinase spans 28–281 (FTDLREIGHG…SEELLKHMFV (254 aa)). Residues 34 to 42 (IGHGSFGAV) and Lys57 contribute to the ATP site. The Proton acceptor role is filled by Asp151. Disordered stretches follow at residues 324–380 (PAVE…DKSE) and 404–433 (ENYQEEGDPRTRASDPQSPPQVSRHKSHYR). Residues 350–370 (SNQSIPSMSISASSQSSSVNS) are compositionally biased toward low complexity. Phosphoserine is present on residues Ser421 and Ser445. Residues 458 to 651 (SELREQMSGY…QTQKDLEHAM (194 aa)) adopt a coiled-coil conformation. A disordered region spans residues 567-587 (KEELNENQSTPKKEKQEWLSK). Basic and acidic residues predominate over residues 577–587 (PKKEKQEWLSK). Thr669 bears the Phosphothreonine mark. Residues 754-877 (KAVLKRLKEE…LERQAREIEA (124 aa)) adopt a coiled-coil conformation. The interval 905–1001 (PGASSWSHNP…ISNGSHMSYT (97 aa)) is disordered. Positions 921-930 (HWGHPMGGTP) are enriched in low complexity. The residue at position 965 (Ser965) is a Phosphoserine. Positions 975–1001 (GGRTEQGMSRSTSVTSQISNGSHMSYT) are enriched in polar residues.

This sequence belongs to the protein kinase superfamily. STE Ser/Thr protein kinase family. STE20 subfamily. In terms of assembly, self-associates. Interacts with MAP2K3. Interacts with SPRED1. Interacts with TESK1; the interaction inhibits TAOK1 kinase activity. Interacts with MAP3K7. Proteolytically processed by caspase-3 (CASP3). In terms of processing, autophosphorylated. Phosphorylated by ATM in response to DNA damage. Phosphorylated by LRRK2.

The protein localises to the cytoplasm. The enzyme catalyses L-seryl-[protein] + ATP = O-phospho-L-seryl-[protein] + ADP + H(+). The catalysed reaction is L-threonyl-[protein] + ATP = O-phospho-L-threonyl-[protein] + ADP + H(+). Serine/threonine-protein kinase activity is inhibited by SPRED1. Serine/threonine-protein kinase involved in various processes such as p38/MAPK14 stress-activated MAPK cascade, DNA damage response and regulation of cytoskeleton stability. Phosphorylates MAP2K3, MAP2K6 and MARK2. Acts as an activator of the p38/MAPK14 stress-activated MAPK cascade by mediating phosphorylation and subsequent activation of the upstream MAP2K3 and MAP2K6 kinases. Involved in G-protein coupled receptor signaling to p38/MAPK14. In response to DNA damage, involved in the G2/M transition DNA damage checkpoint by activating the p38/MAPK14 stress-activated MAPK cascade, probably by mediating phosphorylation of MAP2K3 and MAP2K6. Acts as a regulator of cytoskeleton stability by phosphorylating 'Thr-208' of MARK2, leading to activate MARK2 kinase activity and subsequent phosphorylation and detachment of MAPT/TAU from microtubules. Also acts as a regulator of apoptosis: regulates apoptotic morphological changes, including cell contraction, membrane blebbing and apoptotic bodies formation via activation of the MAPK8/JNK cascade. During fetal development, it plays an essential role in the regulation of neuronal differentiation and migration to the cortical plate. The protein is Serine/threonine-protein kinase TAO1 (Taok1) of Mus musculus (Mouse).